A 221-amino-acid polypeptide reads, in one-letter code: Protein FixW (221 aa).

Residues 5 to 156 (LNLGSPAPPI…LPKVIDGNWR (152 aa)) enclose the Thioredoxin domain. An intrachain disulfide couples Cys-43 to Cys-46.

This sequence belongs to the thioredoxin family.

The sequence is that of Protein FixW (fixW) from Rhizobium leguminosarum.